The sequence spans 209 residues: Chaperone protein TorD (209 aa).

It belongs to the TorD/DmsD family. TorD subfamily.

It localises to the cytoplasm. Functionally, involved in the biogenesis of TorA. Acts on TorA before the insertion of the molybdenum cofactor and, as a result, probably favors a conformation of the apoenzyme that is competent for acquiring the cofactor. The polypeptide is Chaperone protein TorD (Shewanella sp. (strain ANA-3)).